Reading from the N-terminus, the 377-residue chain is Geranylgeranyl transferase type-1 subunit beta (377 aa).

4 PFTB repeats span residues 144–186, 193–234, 245–284, and 291–333; these read KEAC…YMLN, MKKA…CLMG, LNRI…KLLK, and FEKN…SLME. Residues 219-221 and 263-266 contribute to the geranylgeranyl diphosphate site; these read HGG and RPNK. Positions 269 and 271 each coordinate Zn(2+). Geranylgeranyl diphosphate is bound at residue 272 to 275; sequence YSFW. Histidine 321 contributes to the Zn(2+) binding site.

It belongs to the protein prenyltransferase subunit beta family. As to quaternary structure, heterodimer of FNTA and PGGT1B. PGGT1B mediates interaction with substrate peptides. Requires Zn(2+) as cofactor. The cofactor is Mg(2+).

It carries out the reaction geranylgeranyl diphosphate + L-cysteinyl-[protein] = S-geranylgeranyl-L-cysteinyl-[protein] + diphosphate. Functionally, catalyzes the transfer of a geranyl-geranyl moiety from geranyl-geranyl pyrophosphate to a cysteine at the fourth position from the C-terminus of proteins having the C-terminal sequence Cys-aliphatic-aliphatic-X. Known substrates include RAC1, RAC2, RAP1A and RAP1B. The protein is Geranylgeranyl transferase type-1 subunit beta (PGGT1B) of Homo sapiens (Human).